The sequence spans 338 residues: Ketol-acid reductoisomerase (NADP(+)) (338 aa).

A KARI N-terminal Rossmann domain is found at 1 to 181; the sequence is MKVYYDKDAD…GGTKGGVIET (181 aa). Residues 24–27, arginine 47, serine 52, and 82–85 each bind NADP(+); these read YGSQ and DESQ. Histidine 107 is a catalytic residue. Glycine 133 provides a ligand contact to NADP(+). One can recognise a KARI C-terminal knotted domain in the interval 182–327; it reads NFREETETDL…AELRAMMPWI (146 aa). 4 residues coordinate Mg(2+): aspartate 190, glutamate 194, glutamate 226, and glutamate 230. Serine 251 serves as a coordination point for substrate.

This sequence belongs to the ketol-acid reductoisomerase family. It depends on Mg(2+) as a cofactor.

It carries out the reaction (2R)-2,3-dihydroxy-3-methylbutanoate + NADP(+) = (2S)-2-acetolactate + NADPH + H(+). It catalyses the reaction (2R,3R)-2,3-dihydroxy-3-methylpentanoate + NADP(+) = (S)-2-ethyl-2-hydroxy-3-oxobutanoate + NADPH + H(+). It participates in amino-acid biosynthesis; L-isoleucine biosynthesis; L-isoleucine from 2-oxobutanoate: step 2/4. Its pathway is amino-acid biosynthesis; L-valine biosynthesis; L-valine from pyruvate: step 2/4. Involved in the biosynthesis of branched-chain amino acids (BCAA). Catalyzes an alkyl-migration followed by a ketol-acid reduction of (S)-2-acetolactate (S2AL) to yield (R)-2,3-dihydroxy-isovalerate. In the isomerase reaction, S2AL is rearranged via a Mg-dependent methyl migration to produce 3-hydroxy-3-methyl-2-ketobutyrate (HMKB). In the reductase reaction, this 2-ketoacid undergoes a metal-dependent reduction by NADPH to yield (R)-2,3-dihydroxy-isovalerate. This chain is Ketol-acid reductoisomerase (NADP(+)), found in Chromobacterium violaceum (strain ATCC 12472 / DSM 30191 / JCM 1249 / CCUG 213 / NBRC 12614 / NCIMB 9131 / NCTC 9757 / MK).